The chain runs to 504 residues: Maturase K (504 aa).

Belongs to the intron maturase 2 family. MatK subfamily.

The protein localises to the plastid. The protein resides in the chloroplast. Its function is as follows. Usually encoded in the trnK tRNA gene intron. Probably assists in splicing its own and other chloroplast group II introns. This chain is Maturase K, found in Guizotia abyssinica (Niger).